The chain runs to 213 residues: LexA repressor (213 aa).

Positions 29–49 form a DNA-binding region, H-T-H motif; sequence RAEIAQALGFRSPNAAEDHLK. Active-site for autocatalytic cleavage activity residues include serine 131 and lysine 168.

It belongs to the peptidase S24 family. In terms of assembly, homodimer.

The catalysed reaction is Hydrolysis of Ala-|-Gly bond in repressor LexA.. Represses a number of genes involved in the response to DNA damage (SOS response), including recA and lexA. In the presence of single-stranded DNA, RecA interacts with LexA causing an autocatalytic cleavage which disrupts the DNA-binding part of LexA, leading to derepression of the SOS regulon and eventually DNA repair. This is LexA repressor from Bordetella avium (strain 197N).